The sequence spans 1137 residues: Nonsense-mediated mRNA decay factor SMG7 (1137 aa).

An N-acetylserine modification is found at S2. TPR repeat units follow at residues 152-185 (QHCL…VPSN) and 187-219 (QPYN…KFPF). S520 carries the post-translational modification Phosphoserine. Positions 620–631 (ELRKTPVSEARK) are enriched in basic and acidic residues. 6 disordered regions span residues 620 to 646 (ELRK…NSQF), 696 to 794 (LQPT…YQQA), 890 to 911 (IDRR…VPRM), 988 to 1055 (PSLP…AMGG), 1069 to 1089 (SSWH…PSME), and 1104 to 1137 (SSSM…NPPH). T624 carries the post-translational modification Phosphothreonine. 2 stretches are compositionally biased toward polar residues: residues 633 to 646 (PVTQ…NSQF) and 696 to 722 (LQPT…SQQR). A compositionally biased stretch (low complexity) spans 723 to 770 (PSGPGPMNQGPQQSQPPSQQPLTSLPAQPTAQSTSQLQVQALTQQQQS). S781 and S897 each carry phosphoserine. A compositionally biased stretch (polar residues) spans 988–998 (PSLPASSDHST). Positions 999–1025 (PASQSPHSSNPSSLPSSPPTHNHNSVP) are enriched in low complexity. Basic and acidic residues predominate over residues 1036–1050 (DNRDRRTADRWKTDK). Positions 1069-1081 (SSWHQASTPSGTW) are enriched in polar residues. The segment covering 1117-1131 (QLLMQQKQKQQRGQG) has biased composition (low complexity).

Part of a complex that contains SMG5, SMG7, PPP2CA, a short isoform of UPF3A (isoform UPF3AS, but not isoform UPF3AL) and phosphorylated UPF1. Interacts with DHX34; the interaction is RNA-independent.

The protein resides in the cytoplasm. The protein localises to the nucleus. Its function is as follows. Plays a role in nonsense-mediated mRNA decay. Recruits UPF1 to cytoplasmic mRNA decay bodies. Together with SMG5 is thought to provide a link to the mRNA degradation machinery involving exonucleolytic pathways, and to serve as an adapter for UPF1 to protein phosphatase 2A (PP2A), thereby triggering UPF1 dephosphorylation. This is Nonsense-mediated mRNA decay factor SMG7 from Homo sapiens (Human).